Reading from the N-terminus, the 288-residue chain is ATP synthase gamma chain (288 aa).

This sequence belongs to the ATPase gamma chain family. In terms of assembly, F-type ATPases have 2 components, CF(1) - the catalytic core - and CF(0) - the membrane proton channel. CF(1) has five subunits: alpha(3), beta(3), gamma(1), delta(1), epsilon(1). CF(0) has three main subunits: a, b and c.

The protein localises to the cell inner membrane. Produces ATP from ADP in the presence of a proton gradient across the membrane. The gamma chain is believed to be important in regulating ATPase activity and the flow of protons through the CF(0) complex. The protein is ATP synthase gamma chain of Acidithiobacillus ferrooxidans (strain ATCC 23270 / DSM 14882 / CIP 104768 / NCIMB 8455) (Ferrobacillus ferrooxidans (strain ATCC 23270)).